The following is a 999-amino-acid chain: Receptor-like protein kinase 5 (999 aa).

Residues 1-14 form the signal peptide; it reads MLYCLILLLCLSST. Over 15 to 621 the chain is Extracellular; it reads YLPSLSLNQD…LCRKITRSKN (607 aa). LRR repeat units follow at residues 90–112, 115–137, 140–161, 164–186, and 188–208; these read SLHS…DFDT, NLIS…LPFN, NLKF…SFGE, KLES…LGNV, and TLKE…PSQL. N-linked (GlcNAc...) asparagine glycosylation is found at Asn-98 and Asn-102. Residues Asn-150 and Asn-185 are each glycosylated (N-linked (GlcNAc...) asparagine). Asn-210 carries an N-linked (GlcNAc...) asparagine glycan. 2 LRR repeats span residues 213 to 236 and 237 to 259; these read ELQV…SRLT and SLVN…ITQL. N-linked (GlcNAc...) asparagine glycans are attached at residues Asn-269 and Asn-282. LRR repeat units follow at residues 285 to 307, 308 to 330, 332 to 353, 356 to 378, 380 to 402, 404 to 427, 428 to 450, 452 to 474, 500 to 523, 524 to 546, 548 to 569, and 571 to 593; these read TLKR…LNLL, NLES…ITRS, TLSE…QLGA, PLQY…VCGE, KLEY…LGKC, SLTR…WGLP, RLSL…IIGA, NLSN…IGSL, QLSR…RGWK, NLNE…VGIL, VLNY…ELQN, and KLNV…YANK. N-linked (GlcNAc...) asparagine glycosylation occurs at Asn-452. An N-linked (GlcNAc...) asparagine glycan is attached at Asn-576. Residues 622–641 traverse the membrane as a helical segment; that stretch reads IGYVWILLTIFLLAGLVFVV. Over 642–999 the chain is Cytoplasmic; that stretch reads GIVMFIAKCR…PYYTEDLNSV (358 aa). A Protein kinase domain is found at 683 to 968; that stretch reads LDEKNVIGFG…KVVIMLQEVS (286 aa). ATP-binding positions include 689–697 and Lys-711; that span reads IGFGSSGKV. Phosphotyrosine occurs at positions 766 and 806. The active-site Proton acceptor is the Asp-819. A Phosphoserine modification is found at Ser-856. Residues Tyr-864 and Tyr-871 each carry the phosphotyrosine modification. Thr-872 bears the Phosphothreonine mark. The disordered stretch occupies residues 972-999; sequence PCSSPNTSKRSKTGGKLSPYYTEDLNSV.

The protein belongs to the protein kinase superfamily. Ser/Thr protein kinase family. As to quaternary structure, interacts with CST. Binds to IDA. Mg(2+) serves as cofactor. The cofactor is Mn(2+). Autophosphorylated on Ser, Thr and Tyr residues. Expressed in roots and rosettes. Expressed at the base of petioles and pedicels, and in the abscission zones of the floral organs.

It localises to the cell membrane. The catalysed reaction is L-seryl-[protein] + ATP = O-phospho-L-seryl-[protein] + ADP + H(+). The enzyme catalyses L-threonyl-[protein] + ATP = O-phospho-L-threonyl-[protein] + ADP + H(+). It carries out the reaction L-tyrosyl-[protein] + ATP = O-phospho-L-tyrosyl-[protein] + ADP + H(+). Functionally, receptor with a dual specificity kinase activity acting on both serine/threonine- and tyrosine-containing substrates that controls floral organ abscission. May interact with the 'INFLORESCENCE DEFICIENT IN ABSCISSION' (IDA) ligands family. The protein is Receptor-like protein kinase 5 (RLK5) of Arabidopsis thaliana (Mouse-ear cress).